A 215-amino-acid polypeptide reads, in one-letter code: Vesicle-trafficking protein SEC22b-A (215 aa).

Residues 1-190 (MVLQTMIVRV…RSDAKYLNTR (190 aa)) lie on the Cytoplasmic side of the membrane. Residues 6–119 (MIVRVADSLP…YSFIEFDTYI (114 aa)) enclose the Longin domain. In terms of domain architecture, v-SNARE coiled-coil homology spans 134-194 (NLGNINSELH…KYLNTRSTYA (61 aa)). Residues 191–213 (STYAKVAAGAVIIITLIIYVRFW) form a helical membrane-spanning segment. Residues 214–215 (WL) are Lumenal-facing.

It belongs to the synaptobrevin family. Component of 2 distinct SNARE complexes.

It is found in the endoplasmic reticulum membrane. The protein resides in the endoplasmic reticulum-Golgi intermediate compartment membrane. The protein localises to the golgi apparatus. Its subcellular location is the cis-Golgi network membrane. It localises to the trans-Golgi network membrane. It is found in the melanosome. In terms of biological role, SNARE involved in targeting and fusion of ER-derived transport vesicles with the Golgi complex as well as Golgi-derived retrograde transport vesicles with the ER. The protein is Vesicle-trafficking protein SEC22b-A of Danio rerio (Zebrafish).